A 117-amino-acid polypeptide reads, in one-letter code: Prefoldin subunit beta (117 aa).

It belongs to the prefoldin subunit beta family. In terms of assembly, heterohexamer of two alpha and four beta subunits.

It localises to the cytoplasm. Functionally, molecular chaperone capable of stabilizing a range of proteins. Seems to fulfill an ATP-independent, HSP70-like function in archaeal de novo protein folding. This chain is Prefoldin subunit beta, found in Thermococcus kodakarensis (strain ATCC BAA-918 / JCM 12380 / KOD1) (Pyrococcus kodakaraensis (strain KOD1)).